We begin with the raw amino-acid sequence, 269 residues long: Eukaryotic translation initiation factor 3 subunit G-2 (269 aa).

One can recognise an RRM domain in the interval 189–267; the sequence is SAVRISNLSE…LILCVEWSKP (79 aa).

This sequence belongs to the eIF-3 subunit G family. In terms of assembly, component of the eukaryotic translation initiation factor 3 (eIF-3) complex. The eIF-3 complex interacts with pix.

It is found in the cytoplasm. Functionally, RNA-binding component of the eukaryotic translation initiation factor 3 (eIF-3) complex, which is involved in protein synthesis of a specialized repertoire of mRNAs and, together with other initiation factors, stimulates binding of mRNA and methionyl-tRNAi to the 40S ribosome. The eIF-3 complex specifically targets and initiates translation of a subset of mRNAs involved in cell proliferation. This subunit can bind 18S rRNA. The polypeptide is Eukaryotic translation initiation factor 3 subunit G-2 (Drosophila ananassae (Fruit fly)).